The following is a 347-amino-acid chain: MKPWAAFHLIFLVASSLEGEVSNYGTRGAQDTEPTCRTEHQCTRDKIILQSQPGIPGIPGVPGINGSEGLKGDPGPQGLPGETGFDGIPGVAGPKGDKGDQGDKGDKGDKGDKGDACILDDCPPTDVEVRNCQDLLEHGEILNGWYTIYPTKENPMVVFCDMETDGGGWLVFQRRQDGSVDFYLDWESYKKGFGKQESEFWLGNDKIHLLTSSGTQQLRIDLEDFEGSRTFAKYSSFSIGDENEKYRLIVGSYLDGSMNDSFRIHNGHSFSTKDRDNDTNKGNCAMMYKGAWWYFHCHHANLNGLYYKGKHANYADGINWRSGKGYYYSYKYADMKIRPQQSETTVS.

The first 19 residues, 1–19 (MKPWAAFHLIFLVASSLEG), serve as a signal peptide directing secretion. Residues 49–115 (LQSQPGIPGI…DKGDKGDKGD (67 aa)) form a disordered region. In terms of domain architecture, Collagen-like spans 57–114 (GIPGVPGINGSEGLKGDPGPQGLPGETGFDGIPGVAGPKGDKGDQGDKGDKGDKGDKG). Residues 95-115 (KGDKGDQGDKGDKGDKGDKGD) show a composition bias toward basic and acidic residues. The Fibrinogen C-terminal domain occupies 121–341 (DCPPTDVEVR…YADMKIRPQQ (221 aa)). Intrachain disulfides connect Cys132–Cys160 and Cys284–Cys297.

The protein belongs to the ficolin lectin family. Veficolin subfamily. Hydroxylated, possibly at Pro-74 and Pro-94. As to expression, expressed by the venom duct.

Its subcellular location is the secreted. Initiates complement activation and/or interferes in platelet aggregation and/or blood coagulation. The protein is Ryncolin-2 of Cerberus rynchops (Dog-faced water snake).